The chain runs to 378 residues: Small ribosomal subunit protein bS1 (378 aa).

S1 motif domains lie at 1–66 (ETVT…VSRR), 87–155 (GMEV…LGLK), 172–242 (GTKL…LGLK), 259–329 (GDRV…LGVK), and 346–378 (GAIV…ASEA).

Belongs to the bacterial ribosomal protein bS1 family.

Functionally, binds mRNA; thus facilitating recognition of the initiation point. It is needed to translate mRNA with a short Shine-Dalgarno (SD) purine-rich sequence. This is Small ribosomal subunit protein bS1 (rpsA) from Providencia sp.